The following is a 2104-amino-acid chain: 5'-3' DNA helicase ZGRF1 (2104 aa).

Over residues 335 to 345 (SSPIHSSTVDG) the composition is skewed to polar residues. A disordered region spans residues 335–359 (SSPIHSSTVDGNDTERKPKAQEDDV). Phosphoserine is present on Ser-336. The span at 347 to 356 (DTERKPKAQE) shows a compositional bias: basic and acidic residues. A phosphoserine mark is found at Ser-793 and Ser-864. Residues Cys-1349, His-1351, Cys-1374, and Cys-1382 each contribute to the Zn(2+) site. The segment at 1349–1391 (CHHSQPAKLVMVKKEGPNKGRLFYTCDGPKADRCKFFKWLEDV) adopts a GRF-type zinc-finger fold. Residues 2085–2104 (VEEKQKKKSEKEKSKDKSHS) form a disordered region.

In terms of assembly, interacts with DNA repair protein RAD51; the interaction promotes RAD51 strand exchange activity. Also interacts with DNA repair proteins EXO1 and BRCA1; the interactions are increased following DNA damage induction.

Its subcellular location is the nucleus. The catalysed reaction is ATP + H2O = ADP + phosphate + H(+). The enzyme catalyses Couples ATP hydrolysis with the unwinding of duplex DNA at the replication fork by translocating in the 5'-3' direction. This creates two antiparallel DNA single strands (ssDNA). The leading ssDNA polymer is the template for DNA polymerase III holoenzyme which synthesizes a continuous strand.. Its function is as follows. 5'-3' DNA helicase which is recruited to sites of DNA damage and promotes repair of replication-blocking DNA lesions through stimulation of homologous recombination (HR). Promotes HR by directly stimulating RAD51-mediated strand exchange activity. Not required to load RAD51 at sites of DNA damage but promotes recombinational repair after RAD51 recruitment. Also promotes HR by positively regulating EXO1-mediated DNA end resection of double-strand breaks. Required for recruitment of replication protein RPA2 to DNA damage sites. Promotes the initiation of the G2/M checkpoint but not its maintenance. Catalyzes Holliday junction branch migration and dissociation of D-loops and DNA flaps. This chain is 5'-3' DNA helicase ZGRF1 (ZGRF1), found in Homo sapiens (Human).